Reading from the N-terminus, the 1360-residue chain is DNA-directed RNA polymerase subunit beta (1360 aa).

Belongs to the RNA polymerase beta chain family. In terms of assembly, the RNAP catalytic core consists of 2 alpha, 1 beta, 1 beta' and 1 omega subunit. When a sigma factor is associated with the core the holoenzyme is formed, which can initiate transcription.

The enzyme catalyses RNA(n) + a ribonucleoside 5'-triphosphate = RNA(n+1) + diphosphate. DNA-dependent RNA polymerase catalyzes the transcription of DNA into RNA using the four ribonucleoside triphosphates as substrates. This is DNA-directed RNA polymerase subunit beta from Desulfotalea psychrophila (strain LSv54 / DSM 12343).